We begin with the raw amino-acid sequence, 865 residues long: MAELSTRYNPAEIETKWYRYWEEKGYFTPKGVGEKFSIVIPPPNITGRIHMGHALNITLQDIVVRYKRMKGYDVLWVPGEDHAGIATQNAVEKFLLQTQGKTREEIGREKFLEITWEWANKYRREIREQIKALGASVDWTRERFTLDEGLSRAVRKVFVELYRKGLIYRGKYIVNWCPRCKTVLSDEEVEHKEHKSKLYYVKYPVKDSDEYIVVATTRPETMLGDTAVAVHPEDERYKNFVGKTLILPLVGREIPVVADKYVDPKFGTGAVKVTPAHDPNDYLIAQRHNLPMIEIFDDNARINENGGKYKGLDRYEAREKIVKDLEEQGFLVKIEDYTHSVGHCYRCDTVIEPKLSDQWFVSTKPLAKRAIEAVENGEIRFFPERWTKVYLNWMYEIRDWCISRQLWWGHRIPVWYCQDCGHLNVSEEDVEKCEKCGSTNLKQDEDVLDTWFSSALWPFSTLGWPEETEDLKRYYPTDLLVTGFDIIFFWVARMIMMGYEFMNDKPFSHVYIHQLVRDKYGRKMSKSLGNGIDPLEVIDEYGADPMRFTLAILAAQGRDIKLDPRYFDAYKKFANKIWNATRFVLMNLEDYKEVPLENLKTVDKWILTRLNKTVEEVTNALENYDFNIAARTIYNFFWDDFCDWYIEASKPRLKTEERNLVQTVLVKVLDASLRLLHPFMPFLTEELWQKLPVAGESITIAKWPEIERELIDETAEKEFTRLMNMVRGVRNVRAEMNLPQSQRVKVYIKGYEVTEEEELLLKTLGNIEEVSFVNEKPPKTATAYVEEEIEAYVDLGGLIDFEKEKERLKQIMEKIQKEIDRLEKKLANKDFVEKAPEEVVEETKEKLNTNRERLARLESILRDLE.

A 'HIGH' region motif is present at residues 43 to 53 (PNITGRIHMGH). The 'KMSKS' region motif lies at 523-527 (KMSKS). Residue Lys526 coordinates ATP. Positions 797 to 865 (GLIDFEKEKE…RLESILRDLE (69 aa)) form a coiled coil.

Belongs to the class-I aminoacyl-tRNA synthetase family. ValS type 1 subfamily. In terms of assembly, monomer.

Its subcellular location is the cytoplasm. It catalyses the reaction tRNA(Val) + L-valine + ATP = L-valyl-tRNA(Val) + AMP + diphosphate. In terms of biological role, catalyzes the attachment of valine to tRNA(Val). As ValRS can inadvertently accommodate and process structurally similar amino acids such as threonine, to avoid such errors, it has a 'posttransfer' editing activity that hydrolyzes mischarged Thr-tRNA(Val) in a tRNA-dependent manner. The chain is Valine--tRNA ligase from Thermotoga maritima (strain ATCC 43589 / DSM 3109 / JCM 10099 / NBRC 100826 / MSB8).